A 381-amino-acid polypeptide reads, in one-letter code: Periphilin-1 (381 aa).

Composition is skewed to basic and acidic residues over residues M1–H28, P39–R65, and R79–R121. Disordered stretches follow at residues M1–R65 and R79–E260. The Nuclear localization signal signature appears at R117–K123. A Glycyl lysine isopeptide (Lys-Gly) (interchain with G-Cter in SUMO2) cross-link involves residue K123. S124, S128, S147, and S154 each carry phosphoserine. Positions Y130–H156 are enriched in basic and acidic residues. Residues S157–Y168 are compositionally biased toward low complexity. Over residues T175 to S187 the composition is skewed to basic residues. At S181 the chain carries Phosphoserine. K194 is covalently cross-linked (Glycyl lysine isopeptide (Lys-Gly) (interchain with G-Cter in SUMO2)). Residues R195–S208 show a composition bias toward basic and acidic residues. S211 bears the Phosphoserine mark. K213 participates in a covalent cross-link: Glycyl lysine isopeptide (Lys-Gly) (interchain with G-Cter in SUMO2). Phosphoserine occurs at positions 215 and 219. Residues D217–K230 are compositionally biased toward low complexity. A compositionally biased stretch (basic and acidic residues) spans A231 to E260. Residue K241 forms a Glycyl lysine isopeptide (Lys-Gly) (interchain with G-Cter in SUMO2) linkage. At K249 the chain carries N6-acetyllysine; alternate. K249 is covalently cross-linked (Glycyl lysine isopeptide (Lys-Gly) (interchain with G-Cter in SUMO2); alternate). Phosphoserine is present on S339. A Glycyl lysine isopeptide (Lys-Gly) (interchain with G-Cter in SUMO2) cross-link involves residue K342.

In terms of assembly, homodimer. Component of the HUSH complex; at least composed of TASOR, PPHLN1 and MPHOSPH8. Interacts with SIN3A and HDAC1. May interact with PPL. Ubiquitously expressed. Strong expression in the developing somites and limbs, the embryonic nervous system and the adult brain.

The protein resides in the nucleus. It localises to the cytoplasm. It is found in the chromosome. Functionally, component of the HUSH complex, a multiprotein complex that mediates epigenetic repression. The HUSH complex is recruited to genomic loci rich in H3K9me3 and is probably required to maintain transcriptional silencing by promoting recruitment of SETDB1, a histone methyltransferase that mediates further deposition of H3K9me3. In the HUSH complex, contributes to the maintenance of the complex at chromatin. Acts as a transcriptional corepressor and regulates the cell cycle, probably via the HUSH complex. The HUSH complex is also involved in the silencing of unintegrated retroviral DNA: some part of the retroviral DNA formed immediately after infection remains unintegrated in the host genome and is transcriptionally repressed. May be involved in epithelial differentiation by contributing to epidermal integrity and barrier formation. The polypeptide is Periphilin-1 (Mus musculus (Mouse)).